The sequence spans 332 residues: Glycerol-3-phosphate dehydrogenase [NAD(P)+] (332 aa).

NADPH-binding residues include Ser11, Phe12, Lys32, and Lys106. Positions 106, 137, and 139 each coordinate sn-glycerol 3-phosphate. NADPH is bound at residue Ala141. Positions 192, 245, 255, 256, and 257 each coordinate sn-glycerol 3-phosphate. Lys192 acts as the Proton acceptor in catalysis. Arg256 contacts NADPH. Positions 280 and 282 each coordinate NADPH.

The protein belongs to the NAD-dependent glycerol-3-phosphate dehydrogenase family.

Its subcellular location is the cytoplasm. The enzyme catalyses sn-glycerol 3-phosphate + NAD(+) = dihydroxyacetone phosphate + NADH + H(+). It catalyses the reaction sn-glycerol 3-phosphate + NADP(+) = dihydroxyacetone phosphate + NADPH + H(+). It functions in the pathway membrane lipid metabolism; glycerophospholipid metabolism. Functionally, catalyzes the reduction of the glycolytic intermediate dihydroxyacetone phosphate (DHAP) to sn-glycerol 3-phosphate (G3P), the key precursor for phospholipid synthesis. The protein is Glycerol-3-phosphate dehydrogenase [NAD(P)+] of Staphylococcus aureus (strain USA300).